Here is a 203-residue protein sequence, read N- to C-terminus: Recombination protein RecR (203 aa).

A C4-type zinc finger spans residues 56 to 71; the sequence is CSVCGNVSDEERCRIC. The Toprim domain maps to 79-179; it reads SLVCVVEEPK…TVTRIASGLP (101 aa).

It belongs to the RecR family.

In terms of biological role, may play a role in DNA repair. It seems to be involved in an RecBC-independent recombinational process of DNA repair. It may act with RecF and RecO. The polypeptide is Recombination protein RecR (Mycolicibacterium smegmatis (strain ATCC 700084 / mc(2)155) (Mycobacterium smegmatis)).